Consider the following 278-residue polypeptide: Trehalose/maltose transport system permease protein MalG (278 aa).

6 consecutive transmembrane segments (helical) span residues 12 to 32 (IIGA…MIVV), 74 to 94 (IIIA…AAYA), 106 to 126 (IPIF…GYLF), 141 to 161 (LYFP…LSYF), 186 to 206 (IILP…FIAA), and 242 to 262 (GSVM…ALLF). The region spanning 70–262 (LKNSIIIASL…IPLVIMALLF (193 aa)) is the ABC transmembrane type-1 domain.

This sequence belongs to the binding-protein-dependent transport system permease family. In terms of assembly, the complex is composed of two ATP-binding proteins (MalK), two transmembrane proteins (MalG and MalF) and a solute-binding protein (MalE).

The protein resides in the cell membrane. In terms of biological role, part of the ABC transporter complex MalEFGK involved in trehalose/maltose import. Responsible for the translocation of the substrate across the membrane. The polypeptide is Trehalose/maltose transport system permease protein MalG (malG) (Thermococcus litoralis (strain ATCC 51850 / DSM 5473 / JCM 8560 / NS-C)).